The primary structure comprises 217 residues: Ras-related protein RABA1g (217 aa).

Gly-20–Ser-27 contributes to the GTP binding site. Residues Ser-42 to Phe-50 carry the Effector region motif. GTP contacts are provided by residues Asp-68–Gln-72, Asn-126–Asp-129, and Ser-156–Ala-157. S-geranylgeranyl cysteine attachment occurs at residues Cys-214 and Cys-215.

This sequence belongs to the small GTPase superfamily. Rab family.

The protein resides in the cell membrane. Its function is as follows. Intracellular vesicle trafficking and protein transport. The chain is Ras-related protein RABA1g (RABA1G) from Arabidopsis thaliana (Mouse-ear cress).